Here is a 436-residue protein sequence, read N- to C-terminus: Cytokine receptor-like factor 3 (436 aa).

Residues 9 to 87 (LMQEAWESID…VSAIEQENIK (79 aa)) are a coiled coil. In terms of domain architecture, Fibronectin type-III spans 177-270 (PPVQIEELIE…LQTSRTTLVP (94 aa)).

Belongs to the cytokine receptor-like factor 3 family.

The protein resides in the cytoplasm. May play a role in the negative regulation of cell cycle progression. The polypeptide is Cytokine receptor-like factor 3 (crlf3) (Xenopus laevis (African clawed frog)).